The chain runs to 62 residues: Photosystem II reaction center protein Z (62 aa).

2 helical membrane passes run 8–28 and 41–61; these read ALAALVFFSFVMVIGVPFAYA and WVGSGIWTILVIVVAVLNFFV.

The protein belongs to the PsbZ family. As to quaternary structure, PSII is composed of 1 copy each of membrane proteins PsbA, PsbB, PsbC, PsbD, PsbE, PsbF, PsbH, PsbI, PsbJ, PsbK, PsbL, PsbM, PsbT, PsbX, PsbY, PsbZ, Psb30/Ycf12, peripheral proteins PsbO, CyanoQ (PsbQ), PsbU, PsbV and a large number of cofactors. It forms dimeric complexes.

It is found in the cellular thylakoid membrane. May control the interaction of photosystem II (PSII) cores with the light-harvesting antenna, regulates electron flow through the 2 photosystem reaction centers. PSII is a light-driven water plastoquinone oxidoreductase, using light energy to abstract electrons from H(2)O, generating a proton gradient subsequently used for ATP formation. The polypeptide is Photosystem II reaction center protein Z (Gloeothece citriformis (strain PCC 7424) (Cyanothece sp. (strain PCC 7424))).